The sequence spans 412 residues: Peptidase T (412 aa).

Zn(2+) is bound at residue H84. D86 is an active-site residue. Residue D146 participates in Zn(2+) binding. E179 serves as the catalytic Proton acceptor. Zn(2+) contacts are provided by E180, D202, and H385.

Belongs to the peptidase M20B family. Zn(2+) is required as a cofactor.

The protein resides in the cytoplasm. It catalyses the reaction Release of the N-terminal residue from a tripeptide.. Cleaves the N-terminal amino acid of tripeptides. The polypeptide is Peptidase T (Pasteurella multocida (strain Pm70)).